Reading from the N-terminus, the 494-residue chain is Cytochrome P450 2G1 (494 aa).

Position 439 (Cys-439) interacts with heme.

Belongs to the cytochrome P450 family. The cofactor is heme. As to expression, olfactory epithelium.

It is found in the endoplasmic reticulum membrane. The protein localises to the microsome membrane. It catalyses the reaction an organic molecule + reduced [NADPH--hemoprotein reductase] + O2 = an alcohol + oxidized [NADPH--hemoprotein reductase] + H2O + H(+). Its function is as follows. Cytochromes P450 are a group of heme-thiolate monooxygenases. This isozyme seems to be implicated in olfaction. In Oryctolagus cuniculus (Rabbit), this protein is Cytochrome P450 2G1 (CYP2G1).